Here is a 1226-residue protein sequence, read N- to C-terminus: Methionine synthase (1226 aa).

The Hcy-binding domain occupies 7 to 327; it reads KVQIEKQLSE…EHIRQMALVV (321 aa). Zn(2+) is bound by residues C249, C312, and C313. A Pterin-binding domain is found at 358–619; sequence FINVGERTNV…VPEDLREAVE (262 aa). The B12-binding N-terminal domain occupies 652–746; sequence SALEWRDWPV…FINASKEVGA (95 aa). Methylcob(III)alamin-binding positions include E696, 758 to 762, H761, S806, T810, and A862; that span reads GDVHD. The region spanning 748–883 is the B12-binding domain; the sequence is NGKILLATVK…SNELKPSFVE (136 aa). One can recognise an AdoMet activation domain in the interval 899–1226; sequence KQPRTKPVTL…AEKWLGPNLN (328 aa). S-adenosyl-L-methionine is bound by residues D949, R1137, and 1192 to 1193; that span reads YF.

This sequence belongs to the vitamin-B12 dependent methionine synthase family. It depends on methylcob(III)alamin as a cofactor. Zn(2+) is required as a cofactor.

It catalyses the reaction (6S)-5-methyl-5,6,7,8-tetrahydrofolate + L-homocysteine = (6S)-5,6,7,8-tetrahydrofolate + L-methionine. Its pathway is amino-acid biosynthesis; L-methionine biosynthesis via de novo pathway; L-methionine from L-homocysteine (MetH route): step 1/1. Its function is as follows. Catalyzes the transfer of a methyl group from methyl-cobalamin to homocysteine, yielding enzyme-bound cob(I)alamin and methionine. Subsequently, remethylates the cofactor using methyltetrahydrofolate. The protein is Methionine synthase (metH) of Aliivibrio fischeri (Vibrio fischeri).